The primary structure comprises 340 residues: Probable allantoicase (340 aa).

This sequence belongs to the allantoicase family.

It catalyses the reaction allantoate + H2O = (S)-ureidoglycolate + urea. It functions in the pathway nitrogen metabolism; (S)-allantoin degradation; (S)-ureidoglycolate from allantoate (aminidohydrolase route): step 1/1. The sequence is that of Probable allantoicase from Rhizobium meliloti (strain 1021) (Ensifer meliloti).